The primary structure comprises 308 residues: MALEAQPSPSPSPRRSPEAAAGGAGAPGGSAGDADAQARRATSGRPRRRGPQPRRSPPPPFPRTPRPSSAARTGKPVSPPPPPRKKPQFQPPPQPPRAWDPSPPPPPPAPAAPVLVPPPAPAPRPAPAPAPRVPARAVEHDHRVVPDILLRKRPTAVLQRTALVARVAAALLCLAALAVLAADSRKGFALDSYSNYSQLRYSEAVNVIGFVYSVLQFFVLADLMRRNKHLNPRRKGDYFDFFMDQVLAYLLISSSSSATARVGDWIDNWGSDPFPKMANSSIAISFMAFLVFAISALISAYNLFRRDI.

Residues 1–135 are disordered; sequence MALEAQPSPS…APAPAPRVPA (135 aa). The Cytoplasmic portion of the chain corresponds to 1 to 161; it reads MALEAQPSPS…KRPTAVLQRT (161 aa). The segment covering 22–31 has biased composition (gly residues); it reads GGAGAPGGSA. The segment covering 32–44 has biased composition (low complexity); the sequence is GDADAQARRATSG. Composition is skewed to pro residues over residues 54 to 65 and 89 to 132; these read RRSPPPPFPRTP and FQPP…PAPR. The helical transmembrane segment at 162-182 threads the bilayer; the sequence is ALVARVAAALLCLAALAVLAA. At 183–203 the chain is on the extracellular side; the sequence is DSRKGFALDSYSNYSQLRYSE. Asn195 carries N-linked (GlcNAc...) asparagine glycosylation. A helical membrane pass occupies residues 204-224; the sequence is AVNVIGFVYSVLQFFVLADLM. Residues 225–240 lie on the Cytoplasmic side of the membrane; the sequence is RRNKHLNPRRKGDYFD. The chain crosses the membrane as a helical span at residues 241 to 262; it reads FFMDQVLAYLLISSSSSATARV. The Extracellular portion of the chain corresponds to 263 to 280; sequence GDWIDNWGSDPFPKMANS. An N-linked (GlcNAc...) asparagine glycan is attached at Asn279. A helical transmembrane segment spans residues 281–301; sequence SIAISFMAFLVFAISALISAY. At 302–308 the chain is on the cytoplasmic side; the sequence is NLFRRDI.

It belongs to the Casparian strip membrane proteins (CASP) family. Homodimer and heterodimers.

Its subcellular location is the cell membrane. This chain is CASP-like protein 4A2, found in Oryza sativa subsp. japonica (Rice).